A 106-amino-acid chain; its full sequence is Large ribosomal subunit protein uL24 (106 aa).

Belongs to the universal ribosomal protein uL24 family. In terms of assembly, part of the 50S ribosomal subunit.

One of two assembly initiator proteins, it binds directly to the 5'-end of the 23S rRNA, where it nucleates assembly of the 50S subunit. Functionally, one of the proteins that surrounds the polypeptide exit tunnel on the outside of the subunit. This is Large ribosomal subunit protein uL24 from Albidiferax ferrireducens (strain ATCC BAA-621 / DSM 15236 / T118) (Rhodoferax ferrireducens).